A 273-amino-acid chain; its full sequence is 4-hydroxy-tetrahydrodipicolinate reductase (273 aa).

NAD(+) is bound by residues 11-16 (GATGKM) and 106-108 (GTT). The Proton donor/acceptor role is filled by His-162. His-163 is a binding site for (S)-2,3,4,5-tetrahydrodipicolinate. The active-site Proton donor is Lys-166. 172–173 (GT) lines the (S)-2,3,4,5-tetrahydrodipicolinate pocket.

Belongs to the DapB family.

Its subcellular location is the cytoplasm. The enzyme catalyses (S)-2,3,4,5-tetrahydrodipicolinate + NAD(+) + H2O = (2S,4S)-4-hydroxy-2,3,4,5-tetrahydrodipicolinate + NADH + H(+). It catalyses the reaction (S)-2,3,4,5-tetrahydrodipicolinate + NADP(+) + H2O = (2S,4S)-4-hydroxy-2,3,4,5-tetrahydrodipicolinate + NADPH + H(+). It participates in amino-acid biosynthesis; L-lysine biosynthesis via DAP pathway; (S)-tetrahydrodipicolinate from L-aspartate: step 4/4. Functionally, catalyzes the conversion of 4-hydroxy-tetrahydrodipicolinate (HTPA) to tetrahydrodipicolinate. The chain is 4-hydroxy-tetrahydrodipicolinate reductase from Synechococcus sp. (strain ATCC 27144 / PCC 6301 / SAUG 1402/1) (Anacystis nidulans).